A 293-amino-acid polypeptide reads, in one-letter code: Probable metal transport system membrane protein TC_0698 (293 aa).

Helical transmembrane passes span 18-38 (SLLAAFGASIAGGIVGSYIVV), 41-61 (IVSISGSIAHSILGGVGIALW), 68-88 (LPISPLHGAIASAIFVAICIG), 101-121 (IISMIWSIGMAVGMLCISKLP), 142-162 (DLYFLGILDLLIVATVSICHT), 186-206 (FLLLILTAITTVVLMYVMGVI), and 242-262 (FLGIILAYILDLPVGPIIAIL).

The protein belongs to the ABC-3 integral membrane protein family.

It is found in the cell inner membrane. Functionally, part of an ATP-driven transport system TC_0696/TC_0697/TC_0698 for a metal. The chain is Probable metal transport system membrane protein TC_0698 from Chlamydia muridarum (strain MoPn / Nigg).